A 192-amino-acid chain; its full sequence is UPF0301 protein Bcen_0382 (192 aa).

The protein belongs to the UPF0301 (AlgH) family.

The polypeptide is UPF0301 protein Bcen_0382 (Burkholderia orbicola (strain AU 1054)).